We begin with the raw amino-acid sequence, 196 residues long: Protein GrpE (196 aa).

Residues 1–41 (MSSKEQKTPEGQAPEEIITEQHDDVEAVEPEVSAEQVDPRD) form a disordered region.

The protein belongs to the GrpE family. As to quaternary structure, homodimer.

Its subcellular location is the cytoplasm. Participates actively in the response to hyperosmotic and heat shock by preventing the aggregation of stress-denatured proteins, in association with DnaK and GrpE. It is the nucleotide exchange factor for DnaK and may function as a thermosensor. Unfolded proteins bind initially to DnaJ; upon interaction with the DnaJ-bound protein, DnaK hydrolyzes its bound ATP, resulting in the formation of a stable complex. GrpE releases ADP from DnaK; ATP binding to DnaK triggers the release of the substrate protein, thus completing the reaction cycle. Several rounds of ATP-dependent interactions between DnaJ, DnaK and GrpE are required for fully efficient folding. This is Protein GrpE from Klebsiella pneumoniae (strain 342).